The sequence spans 202 residues: MSCVPWKGDKAKSESLELPQAAPPQIYHEKQRRELCALHALNNVFQDSNAFTRDTLQEIFQRLSPNTMVTPHKKSMLGNGNYDVNVIMAALQTKGYEAVWWDKRRDVGVIALTNVMGFIMNLPSSLCWGPLKLPLKRQHWICVREVGGAYYNLDSKLKMPEWIGGESELRKFLKHHLRGKNCELLLVVPEEVEAHQSWRTDV.

S15 is modified (phosphoserine). Residues 23–202 form the Josephin domain; it reads PPQIYHEKQR…EAHQSWRTDV (180 aa). Residue C36 is the Nucleophile of the active site. The active-site Proton acceptor is H139.

As to quaternary structure, interacts with beta-actin/ACTB. Monoubiquitinated. Ubiquitination activates deubiquitination activity in vitro.

The protein localises to the cell membrane. Its subcellular location is the cytoplasm. It carries out the reaction Thiol-dependent hydrolysis of ester, thioester, amide, peptide and isopeptide bonds formed by the C-terminal Gly of ubiquitin (a 76-residue protein attached to proteins as an intracellular targeting signal).. In terms of biological role, deubiquitinates monoubiquitinated probes (in vitro). When ubiquitinated, cleaves 'Lys-63'-linked and 'Lys-48'-linked poly-ubiquitin chains (in vitro), hence may act as a deubiquitinating enzyme. May increase macropinocytosis and suppress clathrin- and caveolae-mediated endocytosis. May enhance membrane dynamics and cell motility independently of its catalytic activity. This is Josephin-1 (JOSD1) from Pongo abelii (Sumatran orangutan).